Consider the following 211-residue polypeptide: ATP phosphoribosyltransferase (211 aa).

Belongs to the ATP phosphoribosyltransferase family. Short subfamily. Heteromultimer composed of HisG and HisZ subunits.

Its subcellular location is the cytoplasm. The enzyme catalyses 1-(5-phospho-beta-D-ribosyl)-ATP + diphosphate = 5-phospho-alpha-D-ribose 1-diphosphate + ATP. It functions in the pathway amino-acid biosynthesis; L-histidine biosynthesis; L-histidine from 5-phospho-alpha-D-ribose 1-diphosphate: step 1/9. In terms of biological role, catalyzes the condensation of ATP and 5-phosphoribose 1-diphosphate to form N'-(5'-phosphoribosyl)-ATP (PR-ATP). Has a crucial role in the pathway because the rate of histidine biosynthesis seems to be controlled primarily by regulation of HisG enzymatic activity. The polypeptide is ATP phosphoribosyltransferase (Pseudomonas syringae pv. tomato (strain ATCC BAA-871 / DC3000)).